We begin with the raw amino-acid sequence, 616 residues long: Cleavage stimulation factor subunit 2 tau variant (616 aa).

An RRM domain is found at R16–S94. 2 disordered regions span residues G203 to H241 and I262 to M418. Low complexity-rich tracts occupy residues P223 to N233 and V319 to G331. The residue at position 320 (T320) is a Phosphothreonine. Basic and acidic residues predominate over residues S368–R381. The stretch at M418–A422 is one 1-1 repeat. The segment at M418–G462 is 9 X 5 AA tandem repeats of M-E-T-R-[AG]. The 1-2; approximate repeat unit spans residues M423 to V427. The stretch at L428–V432 is one 1-3; approximate repeat. A 1-4; approximate repeat occupies M433–G437. The 1-5; approximate repeat unit spans residues M438–A442. A 1-6 repeat occupies M443–G447. One copy of the 1-7; approximate repeat lies at M448–G452. A 1-8; approximate repeat occupies M453 to G457. One copy of the 1-9; approximate repeat lies at L458 to G462. Repeat copies occupy residues G505–Q509, G510–Q514, G515–Q519, and G520–Q524. The tract at residues G505–Q549 is 9 X 5 AA tandem repeats of G-[AT]-G-[MI]-Q. One copy of the 2-5; approximate repeat lies at G525–Q529. Residues G530–Q534 form a 2-6 repeat. One copy of the 2-7; approximate repeat lies at G535–Q539. Residues G540–Q544 form a 2-8; approximate repeat. Residues G542–D573 are disordered. The 2-9; approximate repeat unit spans residues G545–Q549. Positions G550–Q568 are enriched in low complexity. S563 carries the phosphoserine modification.

The protein localises to the nucleus. May play a significant role in AAUAAA-independent mRNA polyadenylation in germ cells. Directly involved in the binding to pre-mRNAs. In Homo sapiens (Human), this protein is Cleavage stimulation factor subunit 2 tau variant (CSTF2T).